The chain runs to 287 residues: (S)-phenoxypropionate/alpha-ketoglutarate-dioxygenase (287 aa).

2 residues coordinate Fe cation: histidine 102 and aspartate 104. The 2-oxoglutarate site is built by threonine 129 and tryptophan 242. Histidine 257 lines the Fe cation pocket. Residue arginine 268 participates in 2-oxoglutarate binding.

This sequence belongs to the TfdA dioxygenase family. In terms of assembly, monomer. The cofactor is Fe cation. L-ascorbate is required as a cofactor.

It catalyses the reaction (S)-2-(4-chloro-2-methylphenoxy)propanoate + 2-oxoglutarate + O2 = 2-methyl-4-chlorophenol + pyruvate + succinate + CO2. The catalysed reaction is (S)-(2,4-dichlorophenoxy)propanoate + 2-oxoglutarate + O2 = 2,4-dichlorophenol + pyruvate + succinate + CO2. The protein operates within xenobiotic degradation; 2-(2,4-dichlorophenoxy)propanoate degradation. Functionally, involved in the degradation of the phenoxypropionate herbicides. Catalyzes the enantiospecific cleavage of the ether bond in the herbicid S-dichlorprop ((S)-2-(2,4-dichlorophenoxy)propionate)(S-2,4-DP) and S-mecoprop ((S)-2-(4-chloro-2-methylphenoxy)propionate)(S-2,4-MCPP). It can also accept (RS)-2-(4-chloro-2-methylphenoxy)propionate ((RS)-2,4-MCPP) and phenoxyacetate derivatives such as 2,4-dichlorophenoxyacetate (2,4-D), however it can only accept 2-oxoglutarate as oxygen acceptor. The polypeptide is (S)-phenoxypropionate/alpha-ketoglutarate-dioxygenase (Sphingobium herbicidovorans (strain ATCC 700291 / DSM 11019 / CCUG 56400 / KCTC 2939 / LMG 18315 / NBRC 16415 / MH) (Sphingomonas herbicidovorans)).